The following is a 299-amino-acid chain: Protoheme IX farnesyltransferase 1 (299 aa).

The next 9 helical transmembrane spans lie at 25–45 (VVVLMLITSLVGMFLATRAGV), 47–67 (WSVLLFGNLGIGLCAGGAAVV), 95–115 (LPALAFALLLAVMGLALLLAF), 119–139 (LTAWLTLASLLGYAVLYTGFL), 147–167 (IVIGGLAGAAPPLLGWVAVSG), 173–193 (PLLLVLIIFAWTPPHFWALAI), 217–237 (ALHILLYTLILLAVSLLPYAI), 243–263 (LYLACALALGLRFLHWAWVLY), and 279–299 (IGYLFALFIALLVDHYLLLNL).

The protein belongs to the UbiA prenyltransferase family. Protoheme IX farnesyltransferase subfamily.

It localises to the cell inner membrane. The enzyme catalyses heme b + (2E,6E)-farnesyl diphosphate + H2O = Fe(II)-heme o + diphosphate. It functions in the pathway porphyrin-containing compound metabolism; heme O biosynthesis; heme O from protoheme: step 1/1. Its function is as follows. Converts heme B (protoheme IX) to heme O by substitution of the vinyl group on carbon 2 of heme B porphyrin ring with a hydroxyethyl farnesyl side group. The protein is Protoheme IX farnesyltransferase 1 of Pseudomonas entomophila (strain L48).